We begin with the raw amino-acid sequence, 110 residues long: NAD(P)H-quinone oxidoreductase subunit M (110 aa).

Belongs to the complex I NdhM subunit family. NDH-1 can be composed of about 15 different subunits; different subcomplexes with different compositions have been identified which probably have different functions.

The protein resides in the cellular thylakoid membrane. The catalysed reaction is a plastoquinone + NADH + (n+1) H(+)(in) = a plastoquinol + NAD(+) + n H(+)(out). It catalyses the reaction a plastoquinone + NADPH + (n+1) H(+)(in) = a plastoquinol + NADP(+) + n H(+)(out). NDH-1 shuttles electrons from an unknown electron donor, via FMN and iron-sulfur (Fe-S) centers, to quinones in the respiratory and/or the photosynthetic chain. The immediate electron acceptor for the enzyme in this species is believed to be plastoquinone. Couples the redox reaction to proton translocation, and thus conserves the redox energy in a proton gradient. Cyanobacterial NDH-1 also plays a role in inorganic carbon-concentration. The protein is NAD(P)H-quinone oxidoreductase subunit M of Synechococcus elongatus (strain ATCC 33912 / PCC 7942 / FACHB-805) (Anacystis nidulans R2).